Here is a 389-residue protein sequence, read N- to C-terminus: Phosphopentomutase (389 aa).

Asp9, Asp282, His287, Asp323, His324, and His335 together coordinate Mn(2+).

This sequence belongs to the phosphopentomutase family. Requires Mn(2+) as cofactor.

It localises to the cytoplasm. The catalysed reaction is 2-deoxy-alpha-D-ribose 1-phosphate = 2-deoxy-D-ribose 5-phosphate. It carries out the reaction alpha-D-ribose 1-phosphate = D-ribose 5-phosphate. It functions in the pathway carbohydrate degradation; 2-deoxy-D-ribose 1-phosphate degradation; D-glyceraldehyde 3-phosphate and acetaldehyde from 2-deoxy-alpha-D-ribose 1-phosphate: step 1/2. Functionally, isomerase that catalyzes the conversion of deoxy-ribose 1-phosphate (dRib-1-P) and ribose 1-phosphate (Rib-1-P) to deoxy-ribose 5-phosphate (dRib-5-P) and ribose 5-phosphate (Rib-5-P), respectively. In Kosmotoga olearia (strain ATCC BAA-1733 / DSM 21960 / TBF 19.5.1), this protein is Phosphopentomutase.